The following is an 88-amino-acid chain: MATKIRLRRMGAKKNPFYRLIVADSNAPRDGRFIEEIGFYDPTKQPEVLNIDEEKAMKWLATGAQPSDTAKSLLRKAGVLAKYHESKK.

This sequence belongs to the bacterial ribosomal protein bS16 family.

The polypeptide is Small ribosomal subunit protein bS16 (Desulfitobacterium hafniense (strain DSM 10664 / DCB-2)).